The following is a 606-amino-acid chain: Chaperone protein DnaK (606 aa).

A Phosphothreonine; by autocatalysis modification is found at threonine 174. Residues 578 to 606 (YTQAGPQGGTNPGGQGGTDGNVNTDYKVY) form a disordered region. The segment covering 583–596 (PQGGTNPGGQGGTD) has biased composition (gly residues).

The protein belongs to the heat shock protein 70 family.

Functionally, acts as a chaperone. This chain is Chaperone protein DnaK, found in Caldicellulosiruptor saccharolyticus (strain ATCC 43494 / DSM 8903 / Tp8T 6331).